The chain runs to 1333 residues: Vascular endothelial growth factor receptor 1 (1333 aa).

The N-terminal stretch at 1 to 22 (MVSCWDTAVLPYALLGCLLLTG) is a signal peptide. Topologically, residues 23–759 (YGSGSKLKVP…QGTSDKSNLE (737 aa)) are extracellular. Ig-like C2-type domains lie at 32 to 124 (PELS…AESS), 152 to 215 (GRQL…VNGH), 231 to 328 (LDVQ…TSVH), 334 to 429 (FISV…NVKP), 430 to 550 (QIYE…RNIK), 557 to 656 (PNGF…EVLV), and 662 to 748 (PHLL…AYLT). 2 disulfides stabilise this stretch: cysteine 53–cysteine 108 and cysteine 159–cysteine 208. Asparagine 101, asparagine 165, asparagine 197, and asparagine 252 each carry an N-linked (GlcNAc...) asparagine glycan. Cysteine 253 and cysteine 312 form a disulfide bridge. Asparagine 324, asparagine 418, asparagine 475, asparagine 517, asparagine 598, asparagine 626, asparagine 667, and asparagine 714 each carry an N-linked (GlcNAc...) asparagine glycan. 2 cysteine pairs are disulfide-bonded: cysteine 455/cysteine 536 and cysteine 578/cysteine 637. Cysteine 683 and cysteine 732 are joined by a disulfide. Residues 760-781 (LITLTCTCVAATLFWLLLTLFI) traverse the membrane as a helical segment. Residues 782–1333 (RKLKRSSSEV…SVVLYSSPPA (552 aa)) lie on the Cytoplasmic side of the membrane. One can recognise a Protein kinase domain in the interval 828-1158 (LKLGKSLGRG…ELVEKLGDLL (331 aa)). ATP is bound by residues 834–842 (LGRGAFGKV) and lysine 862. Position 915 is a phosphotyrosine; by autocatalysis (tyrosine 915). The tract at residues 947 to 983 (EPGLEQGQKPRLDSVSSSSVTSSSFPEDRSVSDVEGD) is disordered. A compositionally biased stretch (low complexity) spans 960–970 (SVSSSSVTSSS). The active-site Proton acceptor is the aspartate 1022. Phosphotyrosine; by autocatalysis is present on residues tyrosine 1053, tyrosine 1169, tyrosine 1213, tyrosine 1242, tyrosine 1322, and tyrosine 1328.

Belongs to the protein kinase superfamily. Tyr protein kinase family. CSF-1/PDGF receptor subfamily. In terms of assembly, interacts with VEGFA, VEGFB and PGF. Monomer in the absence of bound VEGFA, VEGFB or PGF. Homodimer in the presence of bound VEGFA, VEGFB and PGF. Can also form a heterodimer with KDR. Interacts (tyrosine phosphorylated) with CBL, CRK, GRB2, NCK1, PIK3R1, PLCG, PSEN1 and PTPN11. Probably interacts with PTPRB. Interacts with RACK1. Identified in a complex with CBL and CD2AP. Post-translationally, N-glycosylated. In terms of processing, ubiquitinated after VEGFA-mediated autophosphorylation, leading to proteolytic degradation. Autophosphorylated on tyrosine residues upon ligand binding. Autophosphorylation occurs in trans, i.e. one subunit of the dimeric receptor phosphorylates tyrosine residues on the other subunit. Phosphorylation at Tyr-1169 is important for interaction with PLCG. Phosphorylation at Tyr-1213 is important for interaction with PIK3R1, PTPN11, GRB2, and PLCG. Phosphorylation at Tyr-1328 is important for endocytosis and for interaction with CBL, NCK1 and CRK. Is probably dephosphorylated by PTPRB.

The protein resides in the cell membrane. It localises to the endosome. It carries out the reaction L-tyrosyl-[protein] + ATP = O-phospho-L-tyrosyl-[protein] + ADP + H(+). Its activity is regulated as follows. Present in an inactive conformation in the absence of bound ligand. Binding of VEGFA, VEGFB or PGF leads to dimerization and activation by autophosphorylation on tyrosine residues. Tyrosine-protein kinase that acts as a cell-surface receptor for VEGFA, VEGFB and PGF, and plays an essential role in the development of embryonic vasculature, the regulation of angiogenesis, cell survival, cell migration, macrophage function, chemotaxis, and cancer cell invasion. Acts as a positive regulator of postnatal retinal hyaloid vessel regression. May play an essential role as a negative regulator of embryonic angiogenesis by inhibiting excessive proliferation of endothelial cells. Can promote endothelial cell proliferation, survival and angiogenesis in adulthood. Its function in promoting cell proliferation seems to be cell-type specific. Promotes PGF-mediated proliferation of endothelial cells, and proliferation of some types of cancer cells, but does not promote proliferation of normal fibroblasts. Has very high affinity for VEGFA and relatively low protein kinase activity; may function as a negative regulator of VEGFA signaling by limiting the amount of free VEGFA and preventing its binding to KDR. Modulates KDR signaling by forming heterodimers with KDR. Ligand binding leads to the activation of several signaling cascades. Activation of PLCG leads to the production of the cellular signaling molecules diacylglycerol and inositol 1,4,5-trisphosphate and the activation of protein kinase C. Mediates phosphorylation of PIK3R1, the regulatory subunit of phosphatidylinositol 3-kinase, leading to the activation of phosphatidylinositol kinase and the downstream signaling pathway. Mediates activation of MAPK1/ERK2, MAPK3/ERK1 and the MAP kinase signaling pathway, as well as of the AKT1 signaling pathway. Phosphorylates SRC, YES1 and PLCG, and may also phosphorylate CBL. Promotes phosphorylation of AKT1 and PTK2/FAK1. This is Vascular endothelial growth factor receptor 1 (Flt1) from Mus musculus (Mouse).